Consider the following 450-residue polypeptide: Sorting nexin-4 (450 aa).

Methionine 1 is modified (N-acetylmethionine). The interval 1–53 (MEQAAPDPERLWQPAPLEPLSHPDAGLESMVGEETKGARDEGPGDGTMTENNF) is disordered. The segment covering 33–42 (EETKGARDEG) has biased composition (basic and acidic residues). Residues 61–187 (SVSEAEKRTG…YLFLTQEGNW (127 aa)) enclose the PX domain. A 1,2-diacyl-sn-glycero-3-phospho-(1D-myo-inositol-3-phosphate)-binding residues include arginine 106, serine 108, lysine 132, and arginine 154.

The protein belongs to the sorting nexin family. As to quaternary structure, heterodimer; heterodimerizes with SNX7 or SNX30. Interacts with WWC1/KIBRA. Identified in a complex with WWC1/KIBRA and dynein components DYNLL1 and DYNC1I2. Interacts with BIN1.

The protein resides in the early endosome. It is found in the early endosome membrane. Its function is as follows. Involved in the regulation of endocytosis and in several stages of intracellular trafficking. Plays a role in recycling endocytosed transferrin receptor and prevent its degradation. Involved in autophagosome assembly by regulating trafficking and recycling of phospholipid scramblase ATG9A. The sequence is that of Sorting nexin-4 from Bos taurus (Bovine).